The sequence spans 438 residues: MQTIYTKITDIKGNLITVEAEGASLGELVQIERADGRSSYASVLRFDARKVTLQVFGGTSGLSTGDKVIFLGRPMEVIYGDSLLGRRFNGTGKPIDREDECFGEPIPITTPSFNPVCRIVPREMVRTNIPMIDMFNCLVKSQKIPIFSSSGENHNALLMRIAAQTDADIVIIGGMGLTFVDYNFFVKESQRLGFADKCVMFIHKAVDAPVECVLIPDMALACAERFALEQKKNVLVLLTDMTAFADALKEMAITMDQIPANRGYPGSLYSDLAVRYEKAVDIAQGGSITLISVTTMPGDDITHPVPDNTGFITEGQFYLKDNRIDPFGSLSRLKQLVIGKKTREDHGDLANALIRLYADSRKSAERMSMGFKLSNWDKKLLAFSELFEARLMSLEVNIPLEEALDIGWKILSQSFHSEEVGIKEQLIQKYWPKACLHK.

It belongs to the ATPase alpha/beta chains family.

Its function is as follows. Produces ATP from ADP in the presence of a proton gradient across the membrane. The V-type beta chain is a regulatory subunit. This is V-type ATP synthase beta chain (atpB) from Chlamydia trachomatis serovar D (strain ATCC VR-885 / DSM 19411 / UW-3/Cx).